Consider the following 200-residue polypeptide: Insulin, isoform 2 (200 aa).

The disordered stretch occupies residues 148–200 (EVDSSPQPQGSESLPAQPPAQPAPQPEPQQAREPSPEVSCCGLWPRRPQRSQN). Residues 163–174 (AQPPAQPAPQPE) are compositionally biased toward pro residues. A compositionally biased stretch (low complexity) spans 175 to 184 (PQQAREPSPE).

As to expression, expressed in pancreas, eye and, to a lower extent, in limb.

This is Insulin, isoform 2 (INS-IGF2) from Homo sapiens (Human).